The primary structure comprises 311 residues: Aspartate carbamoyltransferase catalytic subunit (311 aa).

The carbamoyl phosphate site is built by Arg-55 and Thr-56. Lys-85 lines the L-aspartate pocket. Residues Arg-106, His-135, and Gln-138 each coordinate carbamoyl phosphate. Positions 168 and 230 each coordinate L-aspartate. Carbamoyl phosphate contacts are provided by Leu-268 and Pro-269.

This sequence belongs to the aspartate/ornithine carbamoyltransferase superfamily. ATCase family. As to quaternary structure, heterododecamer (2C3:3R2) of six catalytic PyrB chains organized as two trimers (C3), and six regulatory PyrI chains organized as three dimers (R2).

The catalysed reaction is carbamoyl phosphate + L-aspartate = N-carbamoyl-L-aspartate + phosphate + H(+). It participates in pyrimidine metabolism; UMP biosynthesis via de novo pathway; (S)-dihydroorotate from bicarbonate: step 2/3. Functionally, catalyzes the condensation of carbamoyl phosphate and aspartate to form carbamoyl aspartate and inorganic phosphate, the committed step in the de novo pyrimidine nucleotide biosynthesis pathway. The chain is Aspartate carbamoyltransferase catalytic subunit from Cronobacter sakazakii (strain ATCC BAA-894) (Enterobacter sakazakii).